Consider the following 454-residue polypeptide: Chromosomal replication initiator protein DnaA (454 aa).

The segment at 1 to 79 (MSLCLWKQCL…NSPLIKFEIY (79 aa)) is domain I, interacts with DnaA modulators. A domain II region spans residues 79–117 (YQIYKENKLKKNIENNNNNKNEKLIWSNIPKFKNLSYRS). A domain III, AAA+ region region spans residues 118-334 (NINKRYNFQN…GALNRVILNS (217 aa)). Residues Gly-162, Gly-164, Lys-165, and Thr-166 each coordinate ATP. Residues 335 to 454 (RFTHRAITVD…FLNLIRTLSK (120 aa)) form a domain IV, binds dsDNA region.

It belongs to the DnaA family. Oligomerizes as a right-handed, spiral filament on DNA at oriC.

It localises to the cytoplasm. Plays an essential role in the initiation and regulation of chromosomal replication. ATP-DnaA binds to the origin of replication (oriC) to initiate formation of the DNA replication initiation complex once per cell cycle. Binds the DnaA box (a 9 base pair repeat at the origin) and separates the double-stranded (ds)DNA. Forms a right-handed helical filament on oriC DNA; dsDNA binds to the exterior of the filament while single-stranded (ss)DNA is stabiized in the filament's interior. The ATP-DnaA-oriC complex binds and stabilizes one strand of the AT-rich DNA unwinding element (DUE), permitting loading of DNA polymerase. After initiation quickly degrades to an ADP-DnaA complex that is not apt for DNA replication. Binds acidic phospholipids. The protein is Chromosomal replication initiator protein DnaA of Buchnera aphidicola subsp. Acyrthosiphon pisum (strain 5A).